A 348-amino-acid polypeptide reads, in one-letter code: Dihydroorotase (348 aa).

Residues histidine 17 and histidine 19 each coordinate Zn(2+). Residues 19–21 (HLR) and asparagine 45 each bind substrate. Lysine 103, histidine 140, and histidine 178 together coordinate Zn(2+). An N6-carboxylysine modification is found at lysine 103. Histidine 140 contributes to the substrate binding site. Leucine 223 provides a ligand contact to substrate. Aspartate 251 contacts Zn(2+). The active site involves aspartate 251. Residues histidine 255 and alanine 267 each coordinate substrate.

This sequence belongs to the metallo-dependent hydrolases superfamily. DHOase family. Class II DHOase subfamily. Homodimer. Requires Zn(2+) as cofactor.

The enzyme catalyses (S)-dihydroorotate + H2O = N-carbamoyl-L-aspartate + H(+). Its pathway is pyrimidine metabolism; UMP biosynthesis via de novo pathway; (S)-dihydroorotate from bicarbonate: step 3/3. Catalyzes the reversible cyclization of carbamoyl aspartate to dihydroorotate. The chain is Dihydroorotase from Salmonella newport (strain SL254).